Consider the following 529-residue polypeptide: MIETNHKDNFLIDGENKNLEINDIISISKGEKNIIFTNELLEFLQKGRDQLENKLKENVAIYGINTGFGGNGDLIIPFDKLDYHQSNLLDFLTCGTGDFFNDQYVRGIQFIIIIALSRGWSGVRPMVIQTLAKHLNKGIIPQVPMHGSVGASGDLVPLSYIANVLCGKGMVKYNEKLMNASDALKITSIEPLVLKSKEGLALVNGTRVMSSVSCISINKFETIFKAAIGSIALAVEGLLASKDHYDMRIHNLKNHPGQILIAQILNKYFNTSDNNTKSSNITFNQSENVQKLDKSVQEVYSLRCAPQILGIISENISNAKIVIKREILSVNDNPLIDPYYGDVLSGGNFMGNHIARIMDGIKLDISLVANHLHSLVALMMHSEFSKGLPNSLSPNPGIYQGYKGMQISQTSLVVWLRQEAAPACIHSLTTEQFNQDIVSLGLHSANGAASMLIKLCDIVSMTLIIAFQAISLRMKSIENFKLPNKVQKLYSSIIKIIPILENDRRTDIDVREITNAILQDKLDFINLNL.

A cross-link (5-imidazolinone (Ala-Gly)) is located at residues 151-153 (ASG). S152 is modified (2,3-didehydroalanine (Ser)).

This sequence belongs to the PAL/histidase family. In terms of processing, contains an active site 4-methylidene-imidazol-5-one (MIO), which is formed autocatalytically by cyclization and dehydration of residues Ala-Ser-Gly.

The protein resides in the cytoplasm. It catalyses the reaction L-histidine = trans-urocanate + NH4(+). The protein operates within amino-acid degradation; L-histidine degradation into L-glutamate; N-formimidoyl-L-glutamate from L-histidine: step 1/3. The protein is hal-like protein DDB_G0273787/DDB_G0273081 of Dictyostelium discoideum (Social amoeba).